Here is a 375-residue protein sequence, read N- to C-terminus: Alanine racemase (375 aa).

Lysine 41 functions as the Proton acceptor; specific for D-alanine in the catalytic mechanism. Lysine 41 is subject to N6-(pyridoxal phosphate)lysine. A substrate-binding site is contributed by arginine 141. The active-site Proton acceptor; specific for L-alanine is the tyrosine 270. Substrate is bound at residue methionine 317.

The protein belongs to the alanine racemase family. It depends on pyridoxal 5'-phosphate as a cofactor.

It carries out the reaction L-alanine = D-alanine. It participates in amino-acid biosynthesis; D-alanine biosynthesis; D-alanine from L-alanine: step 1/1. In terms of biological role, catalyzes the interconversion of L-alanine and D-alanine. May also act on other amino acids. In Lactiplantibacillus plantarum (strain ATCC BAA-793 / NCIMB 8826 / WCFS1) (Lactobacillus plantarum), this protein is Alanine racemase (alr).